The chain runs to 734 residues: Ribosomal RNA large subunit methyltransferase K/L (734 aa).

A THUMP domain is found at 49 to 167 (HAYRICMWSR…KTEHTYCLDL (119 aa)).

The protein belongs to the methyltransferase superfamily. RlmKL family.

The protein localises to the cytoplasm. The catalysed reaction is guanosine(2445) in 23S rRNA + S-adenosyl-L-methionine = N(2)-methylguanosine(2445) in 23S rRNA + S-adenosyl-L-homocysteine + H(+). It carries out the reaction guanosine(2069) in 23S rRNA + S-adenosyl-L-methionine = N(2)-methylguanosine(2069) in 23S rRNA + S-adenosyl-L-homocysteine + H(+). In terms of biological role, specifically methylates the guanine in position 2445 (m2G2445) and the guanine in position 2069 (m7G2069) of 23S rRNA. This is Ribosomal RNA large subunit methyltransferase K/L from Acinetobacter baumannii (strain AYE).